A 122-amino-acid chain; its full sequence is Large ribosomal subunit protein uL14 (122 aa).

This sequence belongs to the universal ribosomal protein uL14 family. As to quaternary structure, part of the 50S ribosomal subunit. Forms a cluster with proteins L3 and L19. In the 70S ribosome, L14 and L19 interact and together make contacts with the 16S rRNA in bridges B5 and B8.

Its function is as follows. Binds to 23S rRNA. Forms part of two intersubunit bridges in the 70S ribosome. This is Large ribosomal subunit protein uL14 from Sorangium cellulosum (strain So ce56) (Polyangium cellulosum (strain So ce56)).